The following is a 361-amino-acid chain: Phospho-N-acetylmuramoyl-pentapeptide-transferase (361 aa).

10 helical membrane passes run 28–48 (LAII…IKFL), 74–94 (TMGG…LADL), 99–119 (IWIT…DDYA), 133–153 (SKLL…EYTD), 168–188 (LSLD…VGSS), 203–223 (VPIA…GNLI), 236–256 (TGEL…FLWF), 263–283 (VFMG…ISVI), 288–308 (VVLS…ILQV), and 338–358 (KVVI…LSSL).

It belongs to the glycosyltransferase 4 family. MraY subfamily. It depends on Mg(2+) as a cofactor.

It is found in the cell inner membrane. It catalyses the reaction UDP-N-acetyl-alpha-D-muramoyl-L-alanyl-gamma-D-glutamyl-meso-2,6-diaminopimeloyl-D-alanyl-D-alanine + di-trans,octa-cis-undecaprenyl phosphate = di-trans,octa-cis-undecaprenyl diphospho-N-acetyl-alpha-D-muramoyl-L-alanyl-D-glutamyl-meso-2,6-diaminopimeloyl-D-alanyl-D-alanine + UMP. Its pathway is cell wall biogenesis; peptidoglycan biosynthesis. Functionally, catalyzes the initial step of the lipid cycle reactions in the biosynthesis of the cell wall peptidoglycan: transfers peptidoglycan precursor phospho-MurNAc-pentapeptide from UDP-MurNAc-pentapeptide onto the lipid carrier undecaprenyl phosphate, yielding undecaprenyl-pyrophosphoryl-MurNAc-pentapeptide, known as lipid I. The polypeptide is Phospho-N-acetylmuramoyl-pentapeptide-transferase (Rickettsia canadensis (strain McKiel)).